Consider the following 245-residue polypeptide: Dehydrogenase/reductase SDR family member 6 (245 aa).

Residues 16–18, D37, and D58 each bind NAD(+); that span reads QGI. A substrate-binding site is contributed by R144. Y147 acts as the Proton acceptor in catalysis. Residues K151 and 180 to 184 each bind NAD(+); that span reads VDTPS. Residues R188 and R205 each contribute to the substrate site.

Belongs to the short-chain dehydrogenases/reductases (SDR) family. In terms of assembly, homotetramer.

The protein resides in the cytoplasm. It catalyses the reaction cis-4-hydroxy-L-proline + NAD(+) = 4-oxo-L-proline + NADH + H(+). It carries out the reaction (R)-3-hydroxybutanoate + NAD(+) = acetoacetate + NADH + H(+). Its pathway is amino-acid metabolism. It participates in siderophore biosynthesis. Functionally, NAD(H)-dependent dehydrogenase/reductase with a preference for cyclic substrates. Catalyzes stereoselective conversion of 4-oxo-L-proline to cis-4-hydroxy-L-proline, likely a detoxification mechanism for ketoprolines. Mediates the formation of 2,5-dihydroxybenzoate (2,5-DHBA), a siderophore that chelates free cytoplasmic iron and associates with LCN2, thereby regulating iron transport and homeostasis while protecting cells against free radical-induced oxidative stress. The iron-siderophore complex is imported into mitochondria, providing an iron source for mitochondrial metabolic processes in particular heme synthesis. May act as a 3-hydroxybutyrate dehydrogenase. The protein is Dehydrogenase/reductase SDR family member 6 of Rattus norvegicus (Rat).